Consider the following 426-residue polypeptide: MLDIKLIRKAPEECETRLRKKDPSISLLPILNLDKEVRQLKTDSESLQSQKKLLSRQIHQTKARNEDASDMIGEVERISQELTRLEALLEEKDAALQNLLVRLPNYPDEDVPISPDKTGNRVIKSVGSPSTFSFPPKHHLELNQKLQILDFKLPGKTSGSGWPAYKNRGVLLEWALLTYLLQKQQSHGFQLWLPPLLVKREILFGSGQIPKFDGQYYRVEDGDQSLYLIPTAEVVLNGFHSQEIFNEKDLPIYYAACTPCFRREAGAAGAHERGLVRVHQFHKVEMFAFTTPEQADQAYEKMLSIVEEILTELKLPYRLSLLSTGDMSFTASKTIDAEVWLPGQKSYYEVSSISQCTDFQSRRSETRYKDSQGKMHFVHTLNGSGLATPRLFVAILENNQQEDGSVIIPEVLRPYLGNQEVLSAQE.

231–233 (TAE) provides a ligand contact to L-serine. Residues 262–264 (RRE) and Val-278 contribute to the ATP site. An L-serine-binding site is contributed by Glu-285. 349 to 352 (EVSS) contacts ATP. Ser-384 provides a ligand contact to L-serine.

It belongs to the class-II aminoacyl-tRNA synthetase family. Type-1 seryl-tRNA synthetase subfamily. In terms of assembly, homodimer. The tRNA molecule binds across the dimer.

It localises to the cytoplasm. The catalysed reaction is tRNA(Ser) + L-serine + ATP = L-seryl-tRNA(Ser) + AMP + diphosphate + H(+). It carries out the reaction tRNA(Sec) + L-serine + ATP = L-seryl-tRNA(Sec) + AMP + diphosphate + H(+). It participates in aminoacyl-tRNA biosynthesis; selenocysteinyl-tRNA(Sec) biosynthesis; L-seryl-tRNA(Sec) from L-serine and tRNA(Sec): step 1/1. In terms of biological role, catalyzes the attachment of serine to tRNA(Ser). Is also able to aminoacylate tRNA(Sec) with serine, to form the misacylated tRNA L-seryl-tRNA(Sec), which will be further converted into selenocysteinyl-tRNA(Sec). In Chlamydia felis (strain Fe/C-56) (Chlamydophila felis), this protein is Serine--tRNA ligase.